Here is a 239-residue protein sequence, read N- to C-terminus: 2-C-methyl-D-erythritol 4-phosphate cytidylyltransferase (239 aa).

It belongs to the IspD/TarI cytidylyltransferase family. IspD subfamily.

The catalysed reaction is 2-C-methyl-D-erythritol 4-phosphate + CTP + H(+) = 4-CDP-2-C-methyl-D-erythritol + diphosphate. The protein operates within isoprenoid biosynthesis; isopentenyl diphosphate biosynthesis via DXP pathway; isopentenyl diphosphate from 1-deoxy-D-xylulose 5-phosphate: step 2/6. Its function is as follows. Catalyzes the formation of 4-diphosphocytidyl-2-C-methyl-D-erythritol from CTP and 2-C-methyl-D-erythritol 4-phosphate (MEP). The polypeptide is 2-C-methyl-D-erythritol 4-phosphate cytidylyltransferase (Acinetobacter baylyi (strain ATCC 33305 / BD413 / ADP1)).